The primary structure comprises 462 residues: beta-Tubulin at 65B (462 aa).

7 residues coordinate GTP: Glu70, Ser137, Gly141, Thr142, Gly143, Asn203, and Asn225. Residue Glu70 participates in Mg(2+) binding. Positions Asp420 to Glu462 are disordered. Positions Ser430 to Ser441 are enriched in gly residues.

This sequence belongs to the tubulin family. In terms of assembly, dimer of alpha and beta chains. A typical microtubule is a hollow water-filled tube with an outer diameter of 25 nm and an inner diameter of 15 nM. Alpha-beta heterodimers associate head-to-tail to form protofilaments running lengthwise along the microtubule wall with the beta-tubulin subunit facing the microtubule plus end conferring a structural polarity. Microtubules usually have 13 protofilaments but different protofilament numbers can be found in some organisms and specialized cells. Mg(2+) serves as cofactor.

It localises to the cytoplasm. The protein resides in the cytoskeleton. In terms of biological role, tubulin is the major constituent of microtubules, a cylinder consisting of laterally associated linear protofilaments composed of alpha- and beta-tubulin heterodimers. Microtubules grow by the addition of GTP-tubulin dimers to the microtubule end, where a stabilizing cap forms. Below the cap, tubulin dimers are in GDP-bound state, owing to GTPase activity of alpha-tubulin. The polypeptide is beta-Tubulin at 65B (Drosophila melanogaster (Fruit fly)).